The chain runs to 1407 residues: DNA-directed RNA polymerase subunit beta' (1407 aa).

4 residues coordinate Zn(2+): cysteine 70, cysteine 72, cysteine 85, and cysteine 88. Mg(2+) is bound by residues aspartate 460, aspartate 462, and aspartate 464. Zn(2+) is bound by residues cysteine 814, cysteine 888, cysteine 895, and cysteine 898.

It belongs to the RNA polymerase beta' chain family. As to quaternary structure, the RNAP catalytic core consists of 2 alpha, 1 beta, 1 beta' and 1 omega subunit. When a sigma factor is associated with the core the holoenzyme is formed, which can initiate transcription. Mg(2+) serves as cofactor. The cofactor is Zn(2+).

It catalyses the reaction RNA(n) + a ribonucleoside 5'-triphosphate = RNA(n+1) + diphosphate. Functionally, DNA-dependent RNA polymerase catalyzes the transcription of DNA into RNA using the four ribonucleoside triphosphates as substrates. The sequence is that of DNA-directed RNA polymerase subunit beta' from Cellvibrio japonicus (strain Ueda107) (Pseudomonas fluorescens subsp. cellulosa).